Consider the following 1291-residue polypeptide: Histone-lysine N-methyltransferase SETDB1 (1291 aa).

Residues E18–L64 adopt a coiled-coil conformation. Residues R108 to D147 are disordered. 2 positions are modified to phosphoserine: S112 and S117. T120 is modified (phosphothreonine). Residues E124–L133 show a composition bias toward acidic residues. Residue K182 forms a Glycyl lysine isopeptide (Lys-Gly) (interchain with G-Cter in SUMO2); alternate linkage. K182 is covalently cross-linked (Glycyl lysine isopeptide (Lys-Gly) (interchain with G-Cter in ubiquitin); alternate). 2 Tudor domains span residues K257–T320 and L347–T403. Residues S404 to P545 form a disordered region. Residues Q433–Q444 show a composition bias toward polar residues. The segment covering V448–S468 has biased composition (pro residues). Residues E477–V515 are compositionally biased toward polar residues. Residues S528–P539 are compositionally biased toward low complexity. Positions Y594–L665 constitute an MBD domain. Residues V727–G800 enclose the Pre-SET domain. Residues C729, C731, C735, C741, C743, C781, C785, C787, and C792 each contribute to the Zn(2+) site. The region spanning V803–N1266 is the SET domain. S-adenosyl-L-methionine contacts are provided by residues K813–W815, D851, and Y853. A Glycyl lysine isopeptide (Lys-Gly) (interchain with G-Cter in ubiquitin) cross-link involves residue K867. The disordered stretch occupies residues E868–A1160. The segment covering E896 to D907 has biased composition (acidic residues). A compositionally biased stretch (pro residues) spans D951 to I963. Position 1025 is a phosphoserine (S1025). The segment covering I1031–K1050 has biased composition (basic and acidic residues). K1032 is covalently cross-linked (Glycyl lysine isopeptide (Lys-Gly) (interchain with G-Cter in SUMO2); alternate). A Glycyl lysine isopeptide (Lys-Gly) (interchain with G-Cter in SUMO1); alternate cross-link involves residue K1032. K1038 is covalently cross-linked (Glycyl lysine isopeptide (Lys-Gly) (interchain with G-Cter in SUMO2)). Positions S1052 to Y1063 are enriched in polar residues. Residue S1066 is modified to Phosphoserine. Residue K1069 forms a Glycyl lysine isopeptide (Lys-Gly) (interchain with G-Cter in SUMO2) linkage. Positions L1100–S1115 are enriched in low complexity. Residues R1116 to S1140 show a composition bias toward polar residues. K1149 participates in a covalent cross-link: Glycyl lysine isopeptide (Lys-Gly) (interchain with G-Cter in SUMO2). N6,N6,N6-trimethyllysine; alternate is present on residues K1170 and K1178. 2 positions are modified to N6,N6-dimethyllysine; alternate: K1170 and K1178. S-adenosyl-L-methionine contacts are provided by residues R1220 and N1223–H1224. Positions 1226, 1279, 1281, and 1286 each coordinate Zn(2+). In terms of domain architecture, Post-SET spans K1275–L1291.

Belongs to the class V-like SAM-binding methyltransferase superfamily. Histone-lysine methyltransferase family. Suvar3-9 subfamily. Part of a complex containing at least CDYL, REST, WIZ, SETDB1, EHMT1 and EHMT2. Forms a complex with ATRX, TRIM28 and ZNF274. Probably part of a corepressor complex containing ZNF304, TRIM28, SETDB1 and DNMT1. Interacts with TRIM28/TIF1B. Interacts with ATF7IP and ATF7IP2; the interaction with ATF7IP protects SETDB1 from proteasomal degradation and is required to stimulate histone methyltransferase activity and facilitate the conversion of dimethylated to trimethylated H3 'Lys-9'. Interacts with CBX1 and CBX5. Interacts with DNMT3A and DNMT3B. Interacts with SUMO2. Interacts with MPHOSPH8. Interacts with ERG. Interacts with HDAC1, HDAC2, SIN3A and SIN3B. Interacts with ATRX. Interacts with RESF1. Interacts with ZNF638. Interacts with TASOR. Interacts with ZNF263; recruited to the SIX3 promoter along with other proteins involved in chromatin modification and transcriptional corepression where it contributes to transcriptional repression. Interacts with PHF13; the interaction probably enhances SETDB1 chromatin-associated levels and activity. Interacts with VRK1. Post-translationally, degraded by the proteasome, shielded by interaction with ATF7IP. In terms of processing, monoubiquitinated at Lys-867 by E2 enzymes of the UBE2E family. The conjugated-Ub is protected from deubiquitination by the SET domain. Monoubiquitination at Lys-867 is required for catalytic activity, H3K9 methylation and endogenous retrovirus silencing. In terms of tissue distribution, widely expressed. High expression in testis.

The protein localises to the nucleus. It is found in the cytoplasm. The protein resides in the chromosome. The catalysed reaction is N(6),N(6)-dimethyl-L-lysyl(9)-[histone H3] + S-adenosyl-L-methionine = N(6),N(6),N(6)-trimethyl-L-lysyl(9)-[histone H3] + S-adenosyl-L-homocysteine + H(+). In terms of biological role, histone methyltransferase that specifically trimethylates 'Lys-9' of histone H3. H3 'Lys-9' trimethylation represents a specific tag for epigenetic transcriptional repression by recruiting HP1 (CBX1, CBX3 and/or CBX5) proteins to methylated histones. Mainly functions in euchromatin regions, thereby playing a central role in the silencing of euchromatic genes. H3 'Lys-9' trimethylation is coordinated with DNA methylation. Required for HUSH-mediated heterochromatin formation and gene silencing. Forms a complex with MBD1 and ATF7IP that represses transcription and couples DNA methylation and histone 'Lys-9' trimethylation. Its activity is dependent on MBD1 and is heritably maintained through DNA replication by being recruited by CAF-1. SETDB1 is targeted to histone H3 by TRIM28/TIF1B, a factor recruited by KRAB zinc-finger proteins. Probably forms a corepressor complex required for activated KRAS-mediated promoter hypermethylation and transcriptional silencing of tumor suppressor genes (TSGs) or other tumor-related genes in colorectal cancer (CRC) cells. Required to maintain a transcriptionally repressive state of genes in undifferentiated embryonic stem cells (ESCs). In ESCs, in collaboration with TRIM28, is also required for H3K9me3 and silencing of endogenous and introduced retroviruses in a DNA-methylation independent-pathway. Associates at promoter regions of tumor suppressor genes (TSGs) leading to their gene silencing. The SETDB1-TRIM28-ZNF274 complex may play a role in recruiting ATRX to the 3'-exons of zinc-finger coding genes with atypical chromatin signatures to establish or maintain/protect H3K9me3 at these transcriptionally active regions. The protein is Histone-lysine N-methyltransferase SETDB1 of Homo sapiens (Human).